An 837-amino-acid polypeptide reads, in one-letter code: Tuftelin-interacting protein 11 (837 aa).

Composition is skewed to basic and acidic residues over residues 1 to 13 (MSLSHLYRDGEGR) and 53 to 64 (VWAERDSDDERP). 3 disordered regions span residues 1–21 (MSLSHLYRDGEGRIDDDDDER), 53–72 (VWAERDSDDERPSFGGKRAR), and 85–133 (LKKG…KGFA). Phosphoserine occurs at positions 2, 59, and 98. The span at 91 to 102 (EEAELEDSDDEE) shows a compositional bias: acidic residues. Over residues 103-116 (RPVKQDDFPKDFGP) the composition is skewed to basic and acidic residues. S144 carries the post-translational modification Phosphoserine. Residues 149-195 (TKGIGQKLLQKMGYVPGRGLGKNAQGIINPIEAKQRKGKGAVGAYGS) enclose the G-patch domain. The segment at 179 to 236 (IEAKQRKGKGAVGAYGSERTTQSMQDFPVVDSEEEAEEEFQKGLSQWRKDPSGSKKKP) is disordered. S210 is modified (phosphoserine). A Nuclear localization signal motif is present at residues 700–705 (VKDKFN). Residues 710-734 (IMNRAVSSNVGAYMQPGARENIAYL) are required for nuclear speckle localization.

This sequence belongs to the TFP11/STIP family. In terms of assembly, identified in the spliceosome C complex. Found in the Intron Large (IL) complex, a post-mRNA release spliceosomal complex containing the excised intron, U2, U5 and U6 snRNPs, and splicing factors. Interacts with TUFT1. Interacts with DHX15; indicative for a recruitment of DHX15 to the IL complex. Interacts with GCFC2.

The protein localises to the cytoplasm. It localises to the nucleus. Involved in pre-mRNA splicing, specifically in spliceosome disassembly during late-stage splicing events. Intron turnover seems to proceed through reactions in two lariat-intron associated complexes termed Intron Large (IL) and Intron Small (IS). In cooperation with DHX15 seems to mediate the transition of the U2, U5 and U6 snRNP-containing IL complex to the snRNP-free IS complex leading to efficient debranching and turnover of excised introns. May play a role in the differentiation of ameloblasts and odontoblasts or in the forming of the enamel extracellular matrix. This Macaca fascicularis (Crab-eating macaque) protein is Tuftelin-interacting protein 11 (TFIP11).